Here is an 868-residue protein sequence, read N- to C-terminus: Receptor-like protein kinase At5g59670 (868 aa).

The first 22 residues, 1–22 (MESSFGLLLALLTLTIIHIVQA), serve as a signal peptide directing secretion. The Extracellular segment spans residues 23 to 500 (QDPQGFISLD…PRLIKPPKKE (478 aa)). 12 N-linked (GlcNAc...) asparagine glycosylation sites follow: Asn-38, Asn-94, Asn-141, Asn-287, Asn-300, Asn-372, Asn-405, Asn-416, Asn-423, Asn-445, Asn-464, and Asn-471. 3 LRR repeats span residues 409 to 432 (PPRITSLNLSSSRLNGTIAAAIQS), 433 to 459 (ITQLETLDLSYNNLTGEVPEFLGKMKS), and 461 to 481 (SVINLSGNNLNGSIPQALRKK). A helical transmembrane segment spans residues 501 to 521 (FPVAIVTLVVFVTVIVVLFLV). Over 522–868 (FRKKMSTIVK…LDTTAVPMAR (347 aa)) the chain is Cytoplasmic. Thr-555 is subject to Phosphothreonine. Residues 564 to 834 (KNFQRVLGKG…SMSQVIHELK (271 aa)) enclose the Protein kinase domain. ATP-binding positions include 570–578 (LGKGGFGMV) and Lys-592. Position 637 is a phosphotyrosine (Tyr-637). Residue Asp-689 is the Proton acceptor of the active site. Position 723 is a phosphoserine (Ser-723). A phosphothreonine mark is found at Thr-724 and Thr-729.

This sequence belongs to the protein kinase superfamily. Ser/Thr protein kinase family. Post-translationally, autophosphorylated on Tyr and Thr residues.

Its subcellular location is the cell membrane. The catalysed reaction is L-seryl-[protein] + ATP = O-phospho-L-seryl-[protein] + ADP + H(+). The enzyme catalyses L-threonyl-[protein] + ATP = O-phospho-L-threonyl-[protein] + ADP + H(+). It carries out the reaction L-tyrosyl-[protein] + ATP = O-phospho-L-tyrosyl-[protein] + ADP + H(+). Its function is as follows. Probable receptor with a dual specificity kinase activity acting on both serine/threonine- and tyrosine-containing substrates. This is Receptor-like protein kinase At5g59670 from Arabidopsis thaliana (Mouse-ear cress).